Consider the following 609-residue polypeptide: Kelch-like protein 20 (609 aa).

The region spanning 68-135 (CDVVLVVGAK…AYTSQITVEE (68 aa)) is the BTB domain. The 103-residue stretch at 170 to 272 (CLGIRAFADT…SPKFLVGTVG (103 aa)) folds into the BACK domain. 6 Kelch repeats span residues 319-365 (VLFA…VLDD), 367-413 (LYAV…VLGG), 414-460 (FLYA…VLGG), 462-507 (LYAV…VYQD), 509-554 (IYAV…VVNG), and 556-601 (LMAV…VIKM).

Component of the BCR(KLHL20) E3 ubiquitin ligase complex, at least composed of CUL3, KLHL20 and RBX1. Interacts with PDZ-RhoGEF/ARHGEF11, DAPK1, PML and CORO7. Interacts with F-actin. Interacts with IFN-gamma (IFNG). Interacts (via kelch repeats) with IVNS1ABP (via kelch repeats); this interaction blocks the assembly of CUL3-KLHL20 complex.

Its subcellular location is the cytoplasm. The protein localises to the perinuclear region. It is found in the nucleus. It localises to the golgi apparatus. The protein resides in the trans-Golgi network. Its subcellular location is the cell projection. The protein localises to the axon. It is found in the dendrite. Its pathway is protein modification; protein ubiquitination. Its function is as follows. Substrate-specific adapter of a BCR (BTB-CUL3-RBX1) E3 ubiquitin-protein ligase complex involved in interferon response and anterograde Golgi to endosome transport. The BCR(KLHL20) E3 ubiquitin ligase complex mediates the ubiquitination of DAPK1, leading to its degradation by the proteasome, thereby acting as a negative regulator of apoptosis. The BCR(KLHL20) E3 ubiquitin ligase complex also specifically mediates 'Lys-33'-linked ubiquitination. Involved in anterograde Golgi to endosome transport by mediating 'Lys-33'-linked ubiquitination of CORO7, promoting interaction between CORO7 and EPS15, thereby facilitating actin polymerization and post-Golgi trafficking. Also acts as a regulator of endothelial migration during angiogenesis by controlling the activation of Rho GTPases. The BCR(KLHL20) E3 ubiquitin ligase complex acts as a regulator of neurite outgrowth by mediating ubiquitination and degradation of PDZ-RhoGEF/ARHGEF11. The sequence is that of Kelch-like protein 20 (KLHL20) from Pongo abelii (Sumatran orangutan).